The sequence spans 171 residues: MENKLIELIETYNDFPRKGIEFKDVLGIIQEPKIFKELILKMSSSQIIRNAEAIISIDARGFIFGSAISLEASKPMIVARKPGKLPGELSKKKYSLEYGENSLSIQKKCLQKYNSYAIVDDLLATGGTVSCVSKLLESNGKEVLGLLVVVELMKLKGRFKLKFPVESSITF.

It belongs to the purine/pyrimidine phosphoribosyltransferase family. In terms of assembly, homodimer.

It is found in the cytoplasm. The enzyme catalyses AMP + diphosphate = 5-phospho-alpha-D-ribose 1-diphosphate + adenine. It participates in purine metabolism; AMP biosynthesis via salvage pathway; AMP from adenine: step 1/1. In terms of biological role, catalyzes a salvage reaction resulting in the formation of AMP, that is energically less costly than de novo synthesis. The protein is Adenine phosphoribosyltransferase of Prochlorococcus marinus (strain MIT 9515).